We begin with the raw amino-acid sequence, 166 residues long: S-phase kinase-associated protein 1 homolog (166 aa).

Residues 105–166 are interaction with the F-box domain of F-box proteins; the sequence is ILAANYLDIK…ENKWAEEATS (62 aa).

Belongs to the SKP1 family. Component of multiple SCF (SKP1-CUL1-F-box) E3 ubiquitin-protein ligase complexes formed of CUL1, SKP1, RBX1 and a variable F-box domain-containing protein as substrate-specific subunit.

The protein operates within protein modification; protein ubiquitination. Essential component of the SCF (SKP1-CUL1-F-box protein) ubiquitin ligase complex, which mediates the ubiquitination of proteins involved in cell cycle progression, signal transduction and transcription. In the SCF complex, serves as an adapter that links the F-box protein to CUL1. The functional specificity of the SCF complex depends on the F-box protein as substrate recognition component. Its association with the holoenzyme telomerase ribonucleoprotein complex suggests that it may play a role in turnover of holoenzyme telomerase complex components. The polypeptide is S-phase kinase-associated protein 1 homolog (Tetrahymena thermophila (strain SB210)).